We begin with the raw amino-acid sequence, 888 residues long: 3-hydroxy-3-methylglutaryl-coenzyme A reductase (888 aa).

At methionine 1–histidine 9 the chain is on the cytoplasmic side. The chain crosses the membrane as a helical span at residues glycine 10–glycine 39. The Lumenal segment spans residues asparagine 40–aspartate 56. A helical transmembrane segment spans residues valine 57 to phenylalanine 78. Residues aspartate 61–leucine 218 enclose the SSD domain. The INSIG-binding motif signature appears at tyrosine 75 to phenylalanine 78. Residues glutamine 79–lysine 89 are Cytoplasmic-facing. A Glycyl lysine isopeptide (Lys-Gly) (interchain with G-Cter in ubiquitin) cross-link involves residue lysine 89. A helical transmembrane segment spans residues tyrosine 90–leucine 114. Over aspartate 115–glutamate 123 the chain is Lumenal. Residues alanine 124–serine 149 form a helical membrane-spanning segment. The Cytoplasmic segment spans residues glutamine 150–arginine 159. Residues glycine 160–valine 187 form a helical membrane-spanning segment. Over arginine 188–glutamate 191 the chain is Lumenal. Residues isoleucine 192 to leucine 220 traverse the membrane as a helical segment. Topologically, residues glutamate 221–lysine 248 are cytoplasmic. Residue lysine 248 forms a Glycyl lysine isopeptide (Lys-Gly) (interchain with G-Cter in ubiquitin) linkage. The chain crosses the membrane as a helical span at residues proline 249–alanine 275. At aspartate 276–lysine 314 the chain is on the lumenal side. 2 N-linked (GlcNAc...) asparagine glycosylation sites follow: asparagine 281 and asparagine 296. The helical transmembrane segment at methionine 315–phenylalanine 339 threads the bilayer. Over glutamate 340–alanine 888 the chain is Cytoplasmic. Catalysis depends on charge relay system residues glutamate 559, lysine 691, and aspartate 767. The active-site Proton donor is the histidine 866. Residue serine 872 is modified to Phosphoserine; by AMPK.

It belongs to the HMG-CoA reductase family. Homotetramer. Homodimer. Interacts (via its SSD) with INSIG1; the interaction, accelerated by sterols, leads to the recruitment of HMGCR to AMFR/gp78 for its ubiquitination by the sterol-mediated ERAD pathway. Interacts with UBIAD1. Post-translationally, undergoes sterol-mediated ubiquitination and ER-associated degradation (ERAD). Accumulation of sterols in the endoplasmic reticulum (ER) membrane, triggers binding of the reductase to the ER membrane protein INSIG1 or INSIG2. The INSIG1 binding leads to the recruitment of the ubiquitin ligase, AMFR/gp78, RNF139 or RNF145, initiating ubiquitination of the reductase. The ubiquitinated reductase is then extracted from the ER membrane and delivered to cytosolic 26S proteosomes by a mechanism probably mediated by the ATPase Valosin-containing protein VCP/p97. The INSIG2-binding leads to the recruitment of the ubiquitin ligase RNF139, initiating ubiquitination of the reductase. Lys-248 is the main site of ubiquitination. Ubiquitination is enhanced by the presence of a geranylgeranylated protein. N-glycosylated. Deglycosylated by NGLY1 on release from the endoplasmic reticulum (ER) in a sterol-mediated manner. In terms of processing, phosphorylated. Phosphorylation at Ser-872 reduces the catalytic activity.

It localises to the endoplasmic reticulum membrane. Its subcellular location is the peroxisome membrane. It catalyses the reaction (R)-mevalonate + 2 NADP(+) + CoA = (3S)-3-hydroxy-3-methylglutaryl-CoA + 2 NADPH + 2 H(+). The protein operates within metabolic intermediate biosynthesis; (R)-mevalonate biosynthesis; (R)-mevalonate from acetyl-CoA: step 3/3. Its activity is regulated as follows. Regulated by a negative feedback mechanism through sterols and non-sterol metabolites derived from mevalonate. Phosphorylation at Ser-872 down-regulates the catalytic activity. Functionally, catalyzes the conversion of (3S)-hydroxy-3-methylglutaryl-CoA (HMG-CoA) to mevalonic acid, the rate-limiting step in the synthesis of cholesterol and other isoprenoids, thus plays a critical role in cellular cholesterol homeostasis. This Pongo abelii (Sumatran orangutan) protein is 3-hydroxy-3-methylglutaryl-coenzyme A reductase (HMGCR).